A 260-amino-acid chain; its full sequence is Thiazole synthase (260 aa).

The Schiff-base intermediate with DXP role is filled by lysine 96. 1-deoxy-D-xylulose 5-phosphate is bound by residues glycine 157, 184-185 (AG), and 206-207 (NT).

The protein belongs to the ThiG family. As to quaternary structure, homotetramer. Forms heterodimers with either ThiH or ThiS.

The protein localises to the cytoplasm. It carries out the reaction [ThiS sulfur-carrier protein]-C-terminal-Gly-aminoethanethioate + 2-iminoacetate + 1-deoxy-D-xylulose 5-phosphate = [ThiS sulfur-carrier protein]-C-terminal Gly-Gly + 2-[(2R,5Z)-2-carboxy-4-methylthiazol-5(2H)-ylidene]ethyl phosphate + 2 H2O + H(+). Its pathway is cofactor biosynthesis; thiamine diphosphate biosynthesis. Its function is as follows. Catalyzes the rearrangement of 1-deoxy-D-xylulose 5-phosphate (DXP) to produce the thiazole phosphate moiety of thiamine. Sulfur is provided by the thiocarboxylate moiety of the carrier protein ThiS. In vitro, sulfur can be provided by H(2)S. The chain is Thiazole synthase from Rhodopseudomonas palustris (strain TIE-1).